A 274-amino-acid polypeptide reads, in one-letter code: Rhamnulose-1-phosphate aldolase (274 aa).

Residue Glu-117 is part of the active site. His-141, His-143, and His-212 together coordinate Zn(2+).

It belongs to the aldolase class II family. RhaD subfamily. Homotetramer. Zn(2+) serves as cofactor.

Its subcellular location is the cytoplasm. It catalyses the reaction L-rhamnulose 1-phosphate = (S)-lactaldehyde + dihydroxyacetone phosphate. Its pathway is carbohydrate degradation; L-rhamnose degradation; glycerone phosphate from L-rhamnose: step 3/3. Functionally, catalyzes the reversible cleavage of L-rhamnulose-1-phosphate to dihydroxyacetone phosphate (DHAP) and L-lactaldehyde. The chain is Rhamnulose-1-phosphate aldolase from Escherichia coli (strain SE11).